Here is a 136-residue protein sequence, read N- to C-terminus: Globin CTP-III (136 aa).

The Globin domain maps to 1–136; sequence LSADQISTVQ…TFFGMIFSKM (136 aa). Heme b is bound at residue H87.

The protein belongs to the globin family. In terms of assembly, monomer.

This chain is Globin CTP-III, found in Chironomus thummi piger (Midge).